An 82-amino-acid polypeptide reads, in one-letter code: DNA-directed RNA polymerase subunit omega (82 aa).

The protein belongs to the RNA polymerase subunit omega family. As to quaternary structure, in cyanobacteria the RNAP catalytic core is composed of 2 alpha, 1 beta, 1 beta', 1 gamma and 1 omega subunit. When a sigma factor is associated with the core the holoenzyme is formed, which can initiate transcription.

The enzyme catalyses RNA(n) + a ribonucleoside 5'-triphosphate = RNA(n+1) + diphosphate. Promotes RNA polymerase assembly. Latches the N- and C-terminal regions of the beta' subunit thereby facilitating its interaction with the beta and alpha subunits. The sequence is that of DNA-directed RNA polymerase subunit omega from Trichodesmium erythraeum (strain IMS101).